We begin with the raw amino-acid sequence, 2055 residues long: Citron rho-interacting kinase (2055 aa).

In terms of domain architecture, Protein kinase spans 97-359 (FEVRSLVGCG…FEGLCCHPFF (263 aa)). ATP contacts are provided by residues 103–111 (VGCGHFAEV) and lysine 126. Catalysis depends on aspartate 221, which acts as the Proton acceptor. In terms of domain architecture, AGC-kinase C-terminal spans 360 to 430 (ARTDWNNIRN…SKALGYLGRS (71 aa)). The segment at 375–398 (VPTLKSDDDTSNFDEPEKNSWVSS) is disordered. Coiled-coil stretches lie at residues 457-747 (LQDS…AQVS), 773-1238 (IKKD…LEYQ), and 1284-1318 (YNEL…AREE). The segment at 1349-1376 (PEHQPSAMSLLAPPSSRRKEASTPEEFS) is disordered. A compositionally biased stretch (low complexity) spans 1353 to 1363 (PSAMSLLAPPS). The segment covering 1365–1376 (RRKEASTPEEFS) has biased composition (basic and acidic residues). The Phorbol-ester/DAG-type zinc-finger motif lies at 1388–1437 (PHRFNVGLNMRATKCAVCLDTVHFGRQASKCLECQVMCHPKCSTCLPATC). The 121-residue stretch at 1469-1589 (SLHLEGWMKV…WVTALESVVA (121 aa)) folds into the PH domain. The CNH domain maps to 1617-1907 (RLDMNCTLPF…RYLGPAISSG (291 aa)). A disordered region spans residues 1932 to 2040 (SGTEQHRVPS…RGRLPAGAVR (109 aa)). A compositionally biased stretch (polar residues) spans 1939-1948 (VPSTSRSSPN). A compositionally biased stretch (basic and acidic residues) spans 1974–2031 (SHPREPSTPHRYRDREGRTELRRDKSPGRPLEREKSPGRMLSTRRERSPGRLFEDSSR).

Belongs to the protein kinase superfamily. AGC Ser/Thr protein kinase family. In terms of assembly, homodimer. Directly interacts with KIF14 depending on the activation state (stronger interaction with the kinase-dead form). Interacts with TTC3.

Its subcellular location is the cytoplasm. It carries out the reaction L-seryl-[protein] + ATP = O-phospho-L-seryl-[protein] + ADP + H(+). The catalysed reaction is L-threonyl-[protein] + ATP = O-phospho-L-threonyl-[protein] + ADP + H(+). Plays a role in cytokinesis. Required for KIF14 localization to the central spindle and midbody. Putative RHO/RAC effector that binds to the GTP-bound forms of RHO and RAC1. It probably binds p21 with a tighter specificity in vivo. Displays serine/threonine protein kinase activity. Plays an important role in the regulation of cytokinesis and the development of the central nervous system. Phosphorylates MYL9/MLC2. This Rattus norvegicus (Rat) protein is Citron rho-interacting kinase.